A 568-amino-acid chain; its full sequence is 2-succinyl-5-enolpyruvyl-6-hydroxy-3-cyclohexene-1-carboxylate synthase (568 aa).

Belongs to the TPP enzyme family. MenD subfamily. Homodimer. Mg(2+) is required as a cofactor. Requires Mn(2+) as cofactor. It depends on thiamine diphosphate as a cofactor.

It carries out the reaction isochorismate + 2-oxoglutarate + H(+) = 5-enolpyruvoyl-6-hydroxy-2-succinyl-cyclohex-3-ene-1-carboxylate + CO2. It participates in quinol/quinone metabolism; 1,4-dihydroxy-2-naphthoate biosynthesis; 1,4-dihydroxy-2-naphthoate from chorismate: step 2/7. The protein operates within quinol/quinone metabolism; menaquinone biosynthesis. Catalyzes the thiamine diphosphate-dependent decarboxylation of 2-oxoglutarate and the subsequent addition of the resulting succinic semialdehyde-thiamine pyrophosphate anion to isochorismate to yield 2-succinyl-5-enolpyruvyl-6-hydroxy-3-cyclohexene-1-carboxylate (SEPHCHC). This is 2-succinyl-5-enolpyruvyl-6-hydroxy-3-cyclohexene-1-carboxylate synthase from Actinobacillus pleuropneumoniae serotype 7 (strain AP76).